Here is a 258-residue protein sequence, read N- to C-terminus: Coiled-coil domain-containing protein 107 (258 aa).

The first 24 residues, 1-24, serve as a signal peptide directing secretion; that stretch reads MASVVSLAGTLGLLLVSALPEVLG. The segment covering 25-35 has biased composition (basic and acidic residues); it reads DRRSPDRRAHP. The interval 25-63 is disordered; it reads DRRSPDRRAHPGDAGQVGPAAAEPRRQSPPSKNQRERAR. Residues 66 to 86 form a helical membrane-spanning segment; it reads ALPLGALYTAAAVAFVLYKCL. Residues 106-134 adopt a coiled-coil conformation; the sequence is LQSEQHLAQLTQQLVQTEQHLNSLMAQLD. The interval 203 to 222 is disordered; it reads EPLNWNTGTRNLTPPREMQP.

It is found in the membrane. The polypeptide is Coiled-coil domain-containing protein 107 (CCDC107) (Bos taurus (Bovine)).